The following is a 1748-amino-acid chain: Tight junction protein 1 (1748 aa).

A PDZ 1 domain is found at 23 to 110; that stretch reads TVTLHRAPGF…NAKITIRRKK (88 aa). Over residues 102–112 the composition is skewed to basic residues; the sequence is AKITIRRKKKV. A disordered region spans residues 102 to 189; sequence AKITIRRKKK…QPAKPTKVTL (88 aa). A compositionally biased stretch (acidic residues) spans 123-136; it reads PVSDNEEDSYDEEI. At Ser-125 the chain carries Phosphoserine. Position 132 is a phosphotyrosine (Tyr-132). The span at 149–175 shows a compositional bias: basic and acidic residues; sequence RRSEKIWPRDRSASRERSLSPRSDRRS. Residues Ser-175, Ser-178, and Ser-179 each carry the phosphoserine modification. Residue Thr-185 is modified to Phosphothreonine. The 79-residue stretch at 186-264 folds into the PDZ 2 domain; sequence KVTLVKSRKN…KLKMVVQRDE (79 aa). Phosphoserine occurs at positions 212 and 241. Phosphothreonine is present on Thr-267. A phosphoserine mark is found at Ser-275, Ser-277, Ser-280, Ser-284, Ser-290, Ser-294, Ser-297, Ser-300, Ser-323, Ser-329, Ser-334, Ser-337, and Ser-353. Residues 295 to 396 are disordered; that stretch reads LASDHSGRSH…PVYAQVGQPD (102 aa). The segment covering 299-327 has biased composition (basic and acidic residues); that stretch reads HSGRSHDRPPRRSRSRSPDQRSEPSDHSR. A compositionally biased stretch (polar residues) spans 329–338; it reads SPQQPSNGSL. Thr-354 is modified (phosphothreonine). Residues 357–377 show a composition bias toward basic and acidic residues; the sequence is KHADDHTPKTVEEVTVERNEK. The PDZ 3 domain occupies 421–502; that stretch reads SMKLVKFRKG…GEEVTILAQK (82 aa). The region spanning 516–584 is the SH3 domain; the sequence is GDSFYIRTHF…PNKNRAEQLA (69 aa). The Guanylate kinase-like domain occupies 598–779; the sequence is RADFWRFRGL…TTTINLNSMN (182 aa). Phosphoserine is present on residues Ser-617 and Ser-622. Residues 633–876 form an occludin (OCLN)-binding region region; that stretch reads YERVVLREAG…GTPPESAITR (244 aa). Position 809 is a phosphothreonine (Thr-809). Phosphoserine occurs at positions 810 and 821. At Tyr-822 the chain carries Phosphotyrosine. 3 positions are modified to phosphoserine: Ser-824, Ser-828, and Ser-837. 2 disordered regions span residues 825 to 1081 and 1095 to 1587; these read APGS…LRYE and DDKQ…PEFD. A phosphothreonine mark is found at Thr-846, Thr-848, Thr-854, Thr-861, and Thr-868. Residues 879–892 are compositionally biased toward basic and acidic residues; it reads EPVREDSSGMHHEN. A compositionally biased stretch (low complexity) spans 893–906; it reads QTYPPYSPQAQPQP. Ser-912 carries the phosphoserine modification. Composition is skewed to polar residues over residues 934 to 953 and 963 to 979; these read PETNPASSTSAVNHNVNLTN and PSTSYSPQADSLRTPST. Ser-968 bears the Phosphoserine mark. The segment covering 998 to 1014 has biased composition (basic and acidic residues); the sequence is DPTKVYRKDPYPEEMMR. Over residues 1061–1072 the composition is skewed to polar residues; the sequence is YESSSYTDQFSR. Ser-1071, Ser-1111, and Ser-1139 each carry phosphoserine. Over residues 1110-1125 the composition is skewed to basic and acidic residues; sequence HSQDLDSRQHPEESSE. Phosphotyrosine is present on residues Tyr-1140 and Tyr-1165. Residues 1151–1371 form an actin-binding region (ABR) region; that stretch reads RASALRHEEQ…FDRRSFENKP (221 aa). Basic and acidic residues-rich tracts occupy residues 1269–1286 and 1336–1347; these read KMFENKRSASLETKKDVN and PPEDIVRSNHYD. Tyr-1354 is modified (phosphotyrosine). A Phosphoserine modification is found at Ser-1366. Positions 1389 to 1400 are enriched in low complexity; the sequence is SQNQSNFSSYSS. Residues 1403 to 1420 show a composition bias toward basic and acidic residues; it reads KPPEADGVDRSFGEKRYE. Position 1413 is a phosphoserine (Ser-1413). 2 stretches are compositionally biased toward polar residues: residues 1459–1470 and 1512–1522; these read NSVSLDFQNSLV and GTEQTQKTVTP. The segment covering 1538-1547 has biased composition (basic and acidic residues); sequence PFERKFESPK. Ser-1545 and Ser-1617 each carry phosphoserine. A ZU5 domain is found at 1634 to 1748; the sequence is ATARGIFNSN…NCVSVLIDHF (115 aa).

The protein belongs to the MAGUK family. Homodimer. Forms heterodimers TJP3. Forms a heterodimer (via PDZ2 domain) with TJP2/ZO2 (via PDZ2 domain). Interacts with OCLN, CALM, claudins, CGN/cingulin, CXADR, GJA12, GJD3 and UBN1. Interacts (via ZU5 domain) with CDC42BPB and MYZAP. Interacts (via PDZ domain) with GJA1. Interacts (via PDZ domains) with ANKRD2. Interacts with POPDC1 (via the C-terminus cytoplasmic tail). Interacts with HSPA4 and KIRREL1. Interacts with DLL1. Interacts with USP53 (via the C-terminal region). Interacts (via ABR region) with F-actin. Interacts with DNMBP (via C-terminal domain); required for the apical cell-cell junction localization of DNMBP. Interacts with SPEF1. Interacts (via N-terminus) with CTNNA1. Interacts with CLDN18. Interacts with CLDN16 (via TRV motif); this is a prerequisite for anchoring of CLDN16 at the tight junction. Interacts with PKP1; the interaction facilitates TJP1/ZO-1 localization to the plasma membrane. Interacts with PATJ (via PDZ1-6 domains); the interaction is required for attachment and extension of TJP1/ZO1 condensates along the apical cell interface. Phosphorylated at tyrosine redidues in response to epidermal growth factor (EGF). This response is dependent on an intact actin microfilament system. Dephosphorylated by PTPRJ. In terms of tissue distribution, the alpha-containing isoform is found in most epithelial cell junctions. The short isoform is found both in endothelial cells and the highly specialized epithelial junctions of renal glomeruli and Sertoli cells of the seminiferous tubules.

It localises to the cell membrane. The protein localises to the cell junction. Its subcellular location is the tight junction. It is found in the gap junction. The protein resides in the cell projection. It localises to the podosome. Functionally, TJP1, TJP2, and TJP3 are closely related scaffolding proteins that link tight junction (TJ) transmembrane proteins such as claudins, junctional adhesion molecules, and occludin to the actin cytoskeleton. Forms a multistranded TJP1/ZO1 condensate which elongates to form a tight junction belt, the belt is anchored at the apical cell membrane via interaction with PATJ. The tight junction acts to limit movement of substances through the paracellular space and as a boundary between the compositionally distinct apical and basolateral plasma membrane domains of epithelial and endothelial cells. Necessary for lumenogenesis, and particularly efficient epithelial polarization and barrier formation. Plays a role in the regulation of cell migration by targeting CDC42BPB to the leading edge of migrating cells. Plays an important role in podosome formation and associated function, thus regulating cell adhesion and matrix remodeling. With TJP2 and TJP3, participates in the junctional retention and stability of the transcription factor DBPA, but is not involved in its shuttling to the nucleus. May play a role in mediating cell morphology changes during ameloblast differentiation via its role in tight junctions. The protein is Tight junction protein 1 of Homo sapiens (Human).